Here is a 338-residue protein sequence, read N- to C-terminus: 6-phosphogluconolactonase (338 aa).

It belongs to the cycloisomerase 2 family.

The enzyme catalyses 6-phospho-D-glucono-1,5-lactone + H2O = 6-phospho-D-gluconate + H(+). The protein operates within carbohydrate degradation; pentose phosphate pathway; D-ribulose 5-phosphate from D-glucose 6-phosphate (oxidative stage): step 2/3. Its function is as follows. Catalyzes the hydrolysis of 6-phosphogluconolactone to 6-phosphogluconate. This chain is 6-phosphogluconolactonase, found in Blochmanniella floridana.